The sequence spans 165 residues: Serine/threonine-protein phosphatase 2A 56 kDa regulatory subunit epsilon isoform (165 aa).

The tract at residues 1-41 is disordered; the sequence is MSSAPTTPPSVDKVDGFSRKSVRKARQKRSQSSSQFRSQGK. S2 bears the N-acetylserine mark. Phosphothreonine is present on T7. Basic residues predominate over residues 20–29; that stretch reads KSVRKARQKR. Phosphoserine occurs at positions 30, 32, and 34. The span at 30–41 shows a compositional bias: low complexity; it reads SQSSSQFRSQGK.

It belongs to the phosphatase 2A regulatory subunit B56 family. PP2A consists of a common heterodimeric core enzyme, composed of a 36 kDa catalytic subunit (subunit C) and a 65 kDa constant regulatory subunit (PR65 or subunit A), that associates with a variety of regulatory subunits. Proteins that associate with the core dimer include three families of regulatory subunits B (the R2/B/PR55/B55, R3/B''/PR72/PR130/PR59 and R5/B'/B56 families), the 48 kDa variable regulatory subunit, viral proteins, and cell signaling molecules. Interacts with SGO1. Found in a complex with at least ARL2, PPP2CB; PPP2R1A, PPP2R2A, PPP2R5E and TBCD. Highly expressed in testis, lung and brain.

It localises to the cytoplasm. Functionally, the B regulatory subunit might modulate substrate selectivity and catalytic activity, and might also direct the localization of the catalytic enzyme to a particular subcellular compartment. The polypeptide is Serine/threonine-protein phosphatase 2A 56 kDa regulatory subunit epsilon isoform (PPP2R5E) (Oryctolagus cuniculus (Rabbit)).